The chain runs to 283 residues: Phospholipid phosphatase 1 (283 aa).

Residues 1-6 (MFDKTR) are Cytoplasmic-facing. The PDZ-binding; involved in localization to the apical cell membrane signature appears at 5–7 (TRL). Residues 7 to 27 (LPYVALDVICVLLAGLPFAIL) form a helical membrane-spanning segment. The Extracellular portion of the chain corresponds to 28-53 (TSRHTPFQRGIFCNDDSIKYPYKEDT). The helical transmembrane segment at 54 to 74 (IPYALLGGIVIPFCIIVMSIG) threads the bilayer. At 75 to 88 (ESLSVYFNVLHSNS) the chain is on the cytoplasmic side. Residues 89–109 (FVGNPYIATIYKAVGAFLFGV) traverse the membrane as a helical segment. Residues 110–164 (SASQSLTDIAKYTIGSLRPHFLAICNPDWSKINCSDGYIEDYICQGNEEKVKEGR) are Extracellular-facing. The segment at 120–128 (KYTIGSLRP) is phosphatase sequence motif I. Asn-142 carries N-linked (GlcNAc...) asparagine glycosylation. A helical membrane pass occupies residues 165–185 (LSFYSGHSSFSMYCMLFVALY). Residues 168-171 (YSGH) are phosphatase sequence motif II. Catalysis depends on His-171, which acts as the Proton donors. Topologically, residues 186–199 (LQARMKGDWARLLR) are cytoplasmic. Residues 200–220 (PMLQFGLIAFSIYVGLSRVSD) traverse the membrane as a helical segment. Residues 216–227 (SRVSDYKHHWSD) are phosphatase sequence motif III. Residues 221–229 (YKHHWSDVT) lie on the Extracellular side of the membrane. The active-site Nucleophile is the His-223. A helical membrane pass occupies residues 230 to 250 (VGLIQGAAMAILVALYVSDFF). At 251 to 283 (KDTHSYKERKEEDPHTTLHETASSRNYSTNHEP) the chain is on the cytoplasmic side. Positions 260–283 (KEEDPHTTLHETASSRNYSTNHEP) are disordered. Residues 269 to 283 (HETASSRNYSTNHEP) show a composition bias toward polar residues.

Belongs to the PA-phosphatase related phosphoesterase family. In terms of assembly, forms functional homodimers and homooligomers that are not required for substrate recognition and catalytic activity. Can also form heterooligomers with PLPP2 and PLPP3. N-glycosylated. N-linked sugars are of the complex type. N-glycosylation is not required for the phosphatase activity. As to expression, widely expressed. Highly expressed in kidney and lung. Almost undetectable in brain, heart, bone, muscle or spleen.

The protein resides in the cell membrane. It localises to the apical cell membrane. Its subcellular location is the membrane raft. The protein localises to the membrane. It is found in the caveola. It catalyses the reaction a 1,2-diacyl-sn-glycero-3-phosphate + H2O = a 1,2-diacyl-sn-glycerol + phosphate. It carries out the reaction 1,2-dihexadecanoyl-sn-glycero-3-phosphate + H2O = 1,2-dihexadecanoyl-sn-glycerol + phosphate. The catalysed reaction is 1,2-di-(9Z-octadecenoyl)-sn-glycero-3-phosphate + H2O = 1,2-di-(9Z-octadecenoyl)-sn-glycerol + phosphate. The enzyme catalyses a monoacyl-sn-glycero-3-phosphate + H2O = a monoacylglycerol + phosphate. It catalyses the reaction (9Z)-octadecenoyl-sn-glycero-3-phosphate + H2O = (9Z-octadecenoyl)-glycerol + phosphate. It carries out the reaction a 1-acyl-sn-glycero-3-phosphate + H2O = a 1-acyl-sn-glycerol + phosphate. The catalysed reaction is 1-(9Z-octadecenoyl)-sn-glycero-3-phosphate + H2O = 1-(9Z-octadecenoyl)-sn-glycerol + phosphate. The enzyme catalyses a 1,2-diacyl-sn-glycerol 3-diphosphate + H2O = a 1,2-diacyl-sn-glycero-3-phosphate + phosphate + H(+). It catalyses the reaction sphing-4-enine 1-phosphate + H2O = sphing-4-enine + phosphate. It carries out the reaction an N-acylsphing-4-enine 1-phosphate + H2O = an N-acylsphing-4-enine + phosphate. The catalysed reaction is N-(octanoyl)-sphing-4-enine-1-phosphate + H2O = N-octanoylsphing-4-enine + phosphate. The enzyme catalyses N-(9Z-octadecenoyl)-ethanolamine phosphate + H2O = N-(9Z-octadecenoyl) ethanolamine + phosphate. It catalyses the reaction 1-hexadecanoyl-2-(9Z-octadecenoyl)-sn-glycero-3-phosphate + H2O = 1-hexadecanoyl-2-(9Z-octadecenoyl)-sn-glycerol + phosphate. It participates in lipid metabolism; phospholipid metabolism. Magnesium-independent phospholipid phosphatase. Insensitive to N-ethylmaleimide. In terms of biological role, magnesium-independent phospholipid phosphatase of the plasma membrane that catalyzes the dephosphorylation of a variety of glycerolipid and sphingolipid phosphate esters including phosphatidate/PA, lysophosphatidate/LPA, diacylglycerol pyrophosphate/DGPP, sphingosine 1-phosphate/S1P and ceramide 1-phosphate/C1P. Also acts on N-oleoyl ethanolamine phosphate/N-(9Z-octadecenoyl)-ethanolamine phosphate, a potential physiological compound. Through its extracellular phosphatase activity allows both the hydrolysis and the cellular uptake of these bioactive lipid mediators from the milieu, regulating signal transduction in different cellular processes. It is for instance essential for the extracellular hydrolysis of S1P and subsequent conversion into intracellular S1P. Involved in the regulation of inflammation, platelets activation, cell proliferation and migration among other processes. May also have an intracellular activity to regulate phospholipid-mediated signaling pathways. This is Phospholipid phosphatase 1 from Mus musculus (Mouse).